A 749-amino-acid chain; its full sequence is Amyloid-beta A4 precursor protein-binding family A member 2 (749 aa).

Disordered regions lie at residues M1–E94 and D130–P343. The residue at position 11 (S11) is a Phosphoserine. Residues G70–T80 are compositionally biased toward polar residues. Acidic residues-rich tracts occupy residues S81 to E94 and T131 to T142. The segment at H185–A270 is STXBP1-binding. S208 is subject to Phosphoserine. Positions D218–D227 are enriched in acidic residues. Residues L237 to E247 are compositionally biased toward polar residues. The segment covering R305–H315 has biased composition (basic and acidic residues). The PID domain occupies L366–D555. 2 consecutive PDZ domains span residues E568–S653 and T659–A735.

In terms of assembly, part of a multimeric complex containing STXBP1 and syntaxin-1. Binds to the cytoplasmic domain of amyloid-beta protein, and to the nuclear factor NF-kappa-B/p65 via its PDZ domain. Interacts with the N-terminal domain of NECAB3.

Its function is as follows. Putative function in synaptic vesicle exocytosis by binding to STXBP1, an essential component of the synaptic vesicle exocytotic machinery. May modulate processing of the amyloid-beta precursor protein (APP) and hence formation of APP-beta. The chain is Amyloid-beta A4 precursor protein-binding family A member 2 (APBA2) from Pongo abelii (Sumatran orangutan).